Consider the following 424-residue polypeptide: Protein pellino (424 aa).

The interval 1–21 is disordered; that stretch reads MVKRTDGTESPILAEDGGDGH. A Phosphoserine modification is found at S10.

The protein belongs to the pellino family. Interacts with pll.

Functionally, scaffold protein involved in the Toll signaling pathway via its interaction with pelle/pll kinase. This chain is Protein pellino (Pli), found in Drosophila melanogaster (Fruit fly).